Here is a 903-residue protein sequence, read N- to C-terminus: Immunoglobulin superfamily member 22 (903 aa).

Ig-like domains follow at residues 67–158 (PEFV…LLVT), 232–322 (EAIR…AELT), 418–508 (PIKF…AIVT), and 606–696 (PSVL…LHLS). Fibronectin type-III domains lie at 703–798 (FASQ…AKDP) and 804–898 (LVQD…MPPP).

The sequence is that of Immunoglobulin superfamily member 22 (IGSF22) from Homo sapiens (Human).